A 494-amino-acid polypeptide reads, in one-letter code: NADPH:adrenodoxin oxidoreductase, mitochondrial (494 aa).

The N-terminal 34 residues, methionine 1–phenylalanine 34, are a transit peptide targeting the mitochondrion. FAD contacts are provided by alanine 51, glutamate 72, leucine 80, and valine 116. Residues glutamine 187–valine 190, arginine 231–arginine 232, and glutamate 243 contribute to the NADP(+) site. Residue serine 313 is modified to Phosphoserine. Residues tryptophan 401 and glycine 408 to isoleucine 410 each bind FAD. NADP(+) is bound at residue glycine 408.

This sequence belongs to the ferredoxin--NADP reductase type 1 family. Monomer. Interacts directly with FDX1. It depends on FAD as a cofactor. In terms of tissue distribution, expressed in the adrenal, testis and ovary and to a lesser extent in the liver and kidney.

It is found in the mitochondrion inner membrane. It carries out the reaction 2 reduced [adrenodoxin] + NADP(+) + H(+) = 2 oxidized [adrenodoxin] + NADPH. The catalysed reaction is 2 reduced [2Fe-2S]-[ferredoxin] + NADP(+) + H(+) = 2 oxidized [2Fe-2S]-[ferredoxin] + NADPH. Its pathway is steroid metabolism; cholesterol metabolism. Functionally, serves as the first electron transfer protein in all the mitochondrial P450 systems including cholesterol side chain cleavage in all steroidogenic tissues, steroid 11-beta hydroxylation in the adrenal cortex, 25-OH-vitamin D3-24 hydroxylation in the kidney, and sterol C-27 hydroxylation in the liver. Also acts as a ferredoxin--NADP(+) reductase essential for coenzyme Q biosynthesis: together with FDX2, transfers the electrons required for the hydroxylation reaction performed by COQ6. This is NADPH:adrenodoxin oxidoreductase, mitochondrial (Fdxr) from Mus musculus (Mouse).